The following is a 219-amino-acid chain: Octanoyltransferase (219 aa).

The BPL/LPL catalytic domain occupies 32–207 (ASSPDQLWIV…TFSHNLGYQN (176 aa)). Substrate-binding positions include 71 to 78 (RGGQVTYH), 138 to 140 (SLG), and 151 to 153 (GLA). Cysteine 169 functions as the Acyl-thioester intermediate in the catalytic mechanism.

Belongs to the LipB family.

It is found in the cytoplasm. The enzyme catalyses octanoyl-[ACP] + L-lysyl-[protein] = N(6)-octanoyl-L-lysyl-[protein] + holo-[ACP] + H(+). The protein operates within protein modification; protein lipoylation via endogenous pathway; protein N(6)-(lipoyl)lysine from octanoyl-[acyl-carrier-protein]: step 1/2. Functionally, catalyzes the transfer of endogenously produced octanoic acid from octanoyl-acyl-carrier-protein onto the lipoyl domains of lipoate-dependent enzymes. Lipoyl-ACP can also act as a substrate although octanoyl-ACP is likely to be the physiological substrate. This is Octanoyltransferase from Shewanella sediminis (strain HAW-EB3).